The chain runs to 99 residues: Progonadoliberin-1 (99 aa).

A signal peptide spans 1–26 (MAAQTFALRLLLVGTLLGTLLGQGCC). Position 27 is a pyrrolidone carboxylic acid (Q27). A Glycine amide modification is found at G36.

Belongs to the GnRH family.

Its subcellular location is the secreted. In terms of biological role, stimulates the secretion of gonadotropins. This is Progonadoliberin-1 (gnrh1) from Dicentrarchus labrax (European seabass).